A 369-amino-acid polypeptide reads, in one-letter code: UPF0284 protein AM1_5137 (369 aa).

Belongs to the UPF0284 family.

This chain is UPF0284 protein AM1_5137, found in Acaryochloris marina (strain MBIC 11017).